A 145-amino-acid polypeptide reads, in one-letter code: Histone H3-like centromeric protein A (145 aa).

The span at 1–19 shows a compositional bias: basic residues; that stretch reads MPRHTSAHKRKPSTPRRRS. The interval 1-54 is disordered; sequence MPRHTSAHKRKPSTPRRRSPPASLPPPAGSRTRRHSGPSGSSPRKKHKFRPGTR. Serine 19 bears the Phosphoserine mark. Residues 51 to 145 form an H3-like region; sequence PGTRALMEIR…ARRIRGVEHM (95 aa).

Belongs to the histone H3 family. As to quaternary structure, component of centromeric nucleosomes, where DNA is wrapped around a histone octamer core. The octamer contains two molecules each of H2A, H2B, CENPA and H4 assembled in one CENPA-H4 heterotetramer and two H2A-H2B heterodimers. CENPA modulates the DNA-binding characteristics of nucleosomes so that protruding DNA ends have higher flexibility than in nucleosomes containing conventional histone H3.

Its subcellular location is the nucleus. It localises to the chromosome. The protein resides in the centromere. In terms of biological role, histone H3-like nucleosomal protein that is specifically found in centromeric nucleosomes. Replaces conventional H3 in the nucleosome core of centromeric chromatin that serves as an assembly site for the inner kinetochore. The presence of CENPA subtly modifies the nucleosome structure and the way DNA is wrapped around the nucleosome and gives rise to protruding DNA ends that are less well-ordered and rigid compared to nucleosomes containing histone H3. May serve as an epigenetic mark that propagates centromere identity through replication and cell division. Required for recruitment and assembly of kinetochore proteins, and as a consequence required for progress through mitosis, chromosome segregation and cytokinesis. This Danio rerio (Zebrafish) protein is Histone H3-like centromeric protein A (cenpa).